The sequence spans 191 residues: GDP-mannose pyrophosphatase (191 aa).

GDP-alpha-D-mannose-binding positions include tyrosine 17, 38–40 (KRE), arginine 67, and 85–87 (AGL). The Nudix hydrolase domain occupies 43–180 (DRGNGATILL…EIRDGKTVLL (138 aa)). 3 residues coordinate Mg(2+): alanine 85, glutamate 100, and glutamate 104. Positions 86–106 (GLLDNDEPEVCIRKEAIEETG) match the Nudix box motif. Residues glutamate 104, glutamate 127, 150–151 (DE), and lysine 176 contribute to the GDP-alpha-D-mannose site. Glutamate 151 is a Mg(2+) binding site.

Belongs to the Nudix hydrolase family. NudK subfamily. As to quaternary structure, homodimer. Requires Mg(2+) as cofactor.

The catalysed reaction is GDP-alpha-D-mannose + H2O = alpha-D-mannose 1-phosphate + GMP + 2 H(+). Nucleoside diphosphate sugar hydrolase that hydrolyzes GDP-mannose as its preferred substrate, yielding GMP and mannose-1-phosphate. The sequence is that of GDP-mannose pyrophosphatase (nudK) from Salmonella typhi.